The primary structure comprises 397 residues: Major outer membrane porin, serovar C (397 aa).

A signal peptide spans 1-22 (MKKLLKSVLVFAALSSASSLQA).

Belongs to the chlamydial porin (CP) (TC 1.B.2) family. Part of a disulfide cross-linked outer membrane complex (COMC) composed of the major outer membrane porin (MOMP), the small cysteine-rich protein (OmcA) and the large cysteine-rich periplasmic protein (OmcB).

It is found in the cell outer membrane. In terms of biological role, in elementary bodies (EBs, the infectious stage, which is able to survive outside the host cell) provides the structural integrity of the outer envelope through disulfide cross-links with the small cysteine-rich protein and the large cysteine-rich periplasmic protein. It has been described in publications as the Sarkosyl-insoluble COMC (Chlamydia outer membrane complex), and serves as the functional equivalent of peptidoglycan. Its function is as follows. Permits diffusion of specific solutes through the outer membrane. This Chlamydia trachomatis protein is Major outer membrane porin, serovar C (ompA).